Reading from the N-terminus, the 140-residue chain is Ribosome-binding factor A (140 aa).

The segment at 1–23 (MLRDRNRSGVRGGAEGPSQRQRR) is disordered.

The protein belongs to the RbfA family. Monomer. Binds 30S ribosomal subunits, but not 50S ribosomal subunits or 70S ribosomes.

The protein localises to the cytoplasm. Its function is as follows. One of several proteins that assist in the late maturation steps of the functional core of the 30S ribosomal subunit. Associates with free 30S ribosomal subunits (but not with 30S subunits that are part of 70S ribosomes or polysomes). Required for efficient processing of 16S rRNA. May interact with the 5'-terminal helix region of 16S rRNA. In Acidiphilium cryptum (strain JF-5), this protein is Ribosome-binding factor A.